The primary structure comprises 160 residues: 6,7-dimethyl-8-ribityllumazine synthase (160 aa).

Residues Trp27, 59 to 61, and 81 to 83 each bind 5-amino-6-(D-ribitylamino)uracil; these read AIE and VVI. 86-87 provides a ligand contact to (2S)-2-hydroxy-3-oxobutyl phosphate; sequence QT. His89 functions as the Proton donor in the catalytic mechanism. Residue Asn114 coordinates 5-amino-6-(D-ribitylamino)uracil. Arg128 lines the (2S)-2-hydroxy-3-oxobutyl phosphate pocket.

It belongs to the DMRL synthase family. Homopentamer.

It catalyses the reaction (2S)-2-hydroxy-3-oxobutyl phosphate + 5-amino-6-(D-ribitylamino)uracil = 6,7-dimethyl-8-(1-D-ribityl)lumazine + phosphate + 2 H2O + H(+). Its pathway is cofactor biosynthesis; riboflavin biosynthesis; riboflavin from 2-hydroxy-3-oxobutyl phosphate and 5-amino-6-(D-ribitylamino)uracil: step 1/2. Catalyzes the formation of 6,7-dimethyl-8-ribityllumazine by condensation of 5-amino-6-(D-ribitylamino)uracil with 3,4-dihydroxy-2-butanone 4-phosphate. This is the penultimate step in the biosynthesis of riboflavin. The protein is 6,7-dimethyl-8-ribityllumazine synthase of Mycobacterium sp. (strain JLS).